A 263-amino-acid chain; its full sequence is Neurogenin-2 (263 aa).

The segment at 20 to 76 is disordered; sequence LGSASPASATLTPMSSSADEEEDEELRRPGSARGQRGAEAEQGVQGSPASGAGGCRP. The segment covering 24 to 36 has biased composition (polar residues); the sequence is SPASATLTPMSSS. A bHLH domain is found at 112–164; that stretch reads TRRLKANNRERNRMHNLNAALDALREVLPTFPEDAKLTKIETLRFAHNYIWAL. Residues 197-231 are compositionally biased toward low complexity; the sequence is LGASGDSPSPPSSWSCTNSPASSSNSTSPYSCTLS. The segment at 197-253 is disordered; that stretch reads LGASGDSPSPPSSWSCTNSPASSSNSTSPYSCTLSPASPGSDVDYWQPPPPEKHRYA.

As to quaternary structure, efficient DNA binding requires dimerization with another bHLH protein.

The protein localises to the nucleus. Transcriptional regulator. Involved in neuronal differentiation. Activates transcription by binding to the E box (5'-CANNTG-3'). This chain is Neurogenin-2 (Neurog2), found in Mus musculus (Mouse).